The following is a 508-amino-acid chain: 2'-5'-oligoadenylate synthase-like protein 2 (508 aa).

Ser69 is an ATP binding site. Mg(2+)-binding residues include Asp81, Asp83, and Asp154. ATP-binding residues include Arg213 and Lys216. Positions 435–473 (ILVFVKYPGGQSKPFTIDPDDTILDLKEKIEDAGGPCAE) constitute a Ubiquitin-like domain.

Belongs to the 2-5A synthase family. It depends on Mg(2+) as a cofactor. Strongly expressed in spleen dendritic cells, whereas, in bone marrow-derived dendritic cells, the amount increases during the maturation process. Expressed in many organs, the highest levels being in thymus, lung, and bone marrow.

The enzyme catalyses 3 ATP = 5'-triphosphoadenylyl-(2'-&gt;5')-adenylyl-(2'-&gt;5')-adenosine + 2 diphosphate. Its activity is regulated as follows. Produced as a latent enzyme which is activated by dsRNA generated during the course of viral infection. The dsRNA activator must be at least 15 nucleotides long, and no modification of the 2'-hydroxyl group is tolerated. ssRNA or dsDNA do not act as activators. Functionally, interferon-induced, dsRNA-activated antiviral enzyme which plays a critical role in cellular innate antiviral response. Synthesizes oligomers of 2'-5'-oligoadenylates (2-5A) from ATP which then bind to the inactive monomeric form of ribonuclease L (RNase L) leading to its dimerization and subsequent activation. Activation of RNase L leads to degradation of cellular as well as viral RNA, resulting in the inhibition of protein synthesis, thus terminating viral replication. Can mediate the antiviral effect via the classical RNase L-dependent pathway or an alternative antiviral pathway independent of RNase L. This is 2'-5'-oligoadenylate synthase-like protein 2 (Oasl2) from Mus musculus (Mouse).